The chain runs to 375 residues: DnaJ homolog subfamily B member 12 (375 aa).

An N-acetylmethionine modification is found at methionine 1. At 1-243 (MESNKDEAER…DRRDNQGDGG (243 aa)) the chain is on the cytoplasmic side. The tract at residues 45–92 (ALIESLNQKPQTAGDQPPPTDTTHATHRKAGGTDAPSANGEAGGESTK) is disordered. The segment covering 49–58 (SLNQKPQTAG) has biased composition (polar residues). Residues 112–176 (YEILGVSRGA…RKQYDQFGDD (65 aa)) form the J domain. The residue at position 185 (histidine 185) is a Pros-methylhistidine. Residues 244–264 (LGVFVQLMPILILILVSALSQ) traverse the membrane as a helical segment. Residues 265-375 (LMVSSPPYSL…LSEVQASLHG (111 aa)) lie on the Lumenal side of the membrane.

Belongs to the DnaJ family. DNAJB12/DNAJB14 subfamily. In terms of assembly, homodimer and homotetramer. Interacts (via J domain) with HSPA8/Hsc70. Forms a multiprotein complex, at least composed of DNAJB12, DNAJB14, HSPA8/Hsc70 and SGTA; interaction with DNAJB14 and HSPA8/Hsc70 is direct. Methylated at His-185 by METTL9.

It is found in the endoplasmic reticulum membrane. Its subcellular location is the nucleus membrane. Its function is as follows. Acts as a co-chaperone with HSPA8/Hsc70; required to promote protein folding and trafficking, prevent aggregation of client proteins, and promote unfolded proteins to endoplasmic reticulum-associated degradation (ERAD) pathway. Acts by determining HSPA8/Hsc70's ATPase and polypeptide-binding activities. Can also act independently of HSPA8/Hsc70: together with DNAJB14, acts as a chaperone that promotes maturation of potassium channels KCND2 and KCNH2 by stabilizing nascent channel subunits and assembling them into tetramers. While stabilization of nascent channel proteins is dependent on HSPA8/Hsc70, the process of oligomerization of channel subunits is independent of HSPA8/Hsc70. When overexpressed, forms membranous structures together with DNAJB14 and HSPA8/Hsc70 within the nucleus; the role of these structures, named DJANGOs, is still unclear. (Microbial infection) In case of infection by polyomavirus, involved in the virus endoplasmic reticulum membrane penetration and infection. This chain is DnaJ homolog subfamily B member 12, found in Homo sapiens (Human).